Consider the following 435-residue polypeptide: ATP-dependent protease ATPase subunit HslU (435 aa).

ATP is bound by residues Ile-18, 60-65 (GVGKTE), Asp-248, Glu-313, and Arg-385.

Belongs to the ClpX chaperone family. HslU subfamily. A double ring-shaped homohexamer of HslV is capped on each side by a ring-shaped HslU homohexamer. The assembly of the HslU/HslV complex is dependent on binding of ATP.

The protein resides in the cytoplasm. ATPase subunit of a proteasome-like degradation complex; this subunit has chaperone activity. The binding of ATP and its subsequent hydrolysis by HslU are essential for unfolding of protein substrates subsequently hydrolyzed by HslV. HslU recognizes the N-terminal part of its protein substrates and unfolds these before they are guided to HslV for hydrolysis. This is ATP-dependent protease ATPase subunit HslU from Rhizobium etli (strain CIAT 652).